A 334-amino-acid polypeptide reads, in one-letter code: Ketol-acid reductoisomerase (NADP(+)) (334 aa).

The region spanning 2–181 (TKVYYDETVT…GATRAGVIET (180 aa)) is the KARI N-terminal Rossmann domain. NADP(+) contacts are provided by residues 25–28 (YGSQ), arginine 48, serine 52, and 82–85 (DEIQ). Residue histidine 107 is part of the active site. NADP(+) is bound at residue glycine 133. A KARI C-terminal knotted domain is found at 182–327 (TFKEETETDL…RELREMMPFI (146 aa)). Mg(2+) contacts are provided by aspartate 190, glutamate 194, glutamate 226, and glutamate 230. Position 251 (serine 251) interacts with substrate.

The protein belongs to the ketol-acid reductoisomerase family. Requires Mg(2+) as cofactor.

The enzyme catalyses (2R)-2,3-dihydroxy-3-methylbutanoate + NADP(+) = (2S)-2-acetolactate + NADPH + H(+). It catalyses the reaction (2R,3R)-2,3-dihydroxy-3-methylpentanoate + NADP(+) = (S)-2-ethyl-2-hydroxy-3-oxobutanoate + NADPH + H(+). It participates in amino-acid biosynthesis; L-isoleucine biosynthesis; L-isoleucine from 2-oxobutanoate: step 2/4. Its pathway is amino-acid biosynthesis; L-valine biosynthesis; L-valine from pyruvate: step 2/4. Functionally, involved in the biosynthesis of branched-chain amino acids (BCAA). Catalyzes an alkyl-migration followed by a ketol-acid reduction of (S)-2-acetolactate (S2AL) to yield (R)-2,3-dihydroxy-isovalerate. In the isomerase reaction, S2AL is rearranged via a Mg-dependent methyl migration to produce 3-hydroxy-3-methyl-2-ketobutyrate (HMKB). In the reductase reaction, this 2-ketoacid undergoes a metal-dependent reduction by NADPH to yield (R)-2,3-dihydroxy-isovalerate. The polypeptide is Ketol-acid reductoisomerase (NADP(+)) (Staphylococcus epidermidis (strain ATCC 35984 / DSM 28319 / BCRC 17069 / CCUG 31568 / BM 3577 / RP62A)).